Here is a 393-residue protein sequence, read N- to C-terminus: Beta-ureidopropionase (393 aa).

The CN hydrolase domain occupies 72 to 344 (VRVGLVQNRI…DGLLVTELNL (273 aa)). Glu-119 functions as the Proton acceptor in the catalytic mechanism. Lys-196 (proton donor) is an active-site residue. Cys-233 (nucleophile) is an active-site residue. A Phosphoserine modification is found at Ser-378.

The protein belongs to the carbon-nitrogen hydrolase superfamily. BUP family. As to quaternary structure, homodimer, homotetramer, homooctamer; can also form higher homooligomers.

It is found in the cytoplasm. It carries out the reaction 3-(carbamoylamino)propanoate + H2O + 2 H(+) = beta-alanine + NH4(+) + CO2. It catalyses the reaction 3-(carbamoylamino)-2-methylpropanoate + H2O + 2 H(+) = (R)-3-amino-2-methylpropanoate + NH4(+) + CO2. It participates in amino-acid biosynthesis; beta-alanine biosynthesis. Functionally, catalyzes a late step in pyrimidine degradation. Converts N-carbamoyl-beta-alanine (3-ureidopropanoate) into beta-alanine, ammonia and carbon dioxide. Likewise, converts N-carbamoyl-beta-aminoisobutyrate (3-ureidoisobutyrate) into beta-aminoisobutyrate, ammonia and carbon dioxide. The protein is Beta-ureidopropionase (Upb1) of Mus musculus (Mouse).